Here is a 591-residue protein sequence, read N- to C-terminus: Isocitrate dehydrogenase kinase/phosphatase (591 aa).

Residues 315–321 (APGVKGM) and Lys336 contribute to the ATP site. The active site involves Asp371.

It belongs to the AceK family.

It is found in the cytoplasm. The catalysed reaction is L-seryl-[isocitrate dehydrogenase] + ATP = O-phospho-L-seryl-[isocitrate dehydrogenase] + ADP + H(+). Bifunctional enzyme which can phosphorylate or dephosphorylate isocitrate dehydrogenase (IDH) on a specific serine residue. This is a regulatory mechanism which enables bacteria to bypass the Krebs cycle via the glyoxylate shunt in response to the source of carbon. When bacteria are grown on glucose, IDH is fully active and unphosphorylated, but when grown on acetate or ethanol, the activity of IDH declines drastically concomitant with its phosphorylation. This Pectobacterium carotovorum subsp. carotovorum (strain PC1) protein is Isocitrate dehydrogenase kinase/phosphatase.